A 381-amino-acid chain; its full sequence is Creatine kinase M-type (381 aa).

The 88-residue stretch at 11–98 (KLKFSAEEEF…FDPVIQDRHG (88 aa)) folds into the Phosphagen kinase N-terminal domain. The segment at 99–118 (GYKPTDKHRTDLNHENLKGG) is disordered. The 243-residue stretch at 125-367 (YVLSSRVRTG…KLMVEMEKKL (243 aa)) folds into the Phosphagen kinase C-terminal domain. ATP-binding positions include 128 to 132 (SSRVR), H191, R236, R292, 320 to 325 (RGTGGV), and D335.

Belongs to the ATP:guanido phosphotransferase family. Dimer of identical or non-identical chains, which can be either B (brain type) or M (muscle type). With MM being the major form in skeletal muscle and myocardium, MB existing in myocardium, and BB existing in many tissues, especially brain. In terms of tissue distribution, predominantly found in skeletal muscle, but not in the heart.

Its subcellular location is the cytoplasm. It carries out the reaction creatine + ATP = N-phosphocreatine + ADP + H(+). In terms of biological role, reversibly catalyzes the transfer of phosphate between ATP and various phosphogens (e.g. creatine phosphate). Creatine kinase isoenzymes play a central role in energy transduction in tissues with large, fluctuating energy demands, such as skeletal muscle, heart, brain and spermatozoa. In Gallus gallus (Chicken), this protein is Creatine kinase M-type.